The following is a 472-amino-acid chain: Glutamate--tRNA ligase (472 aa).

The short motif at 9–19 (PSPTGPLHIGS) is the 'HIGH' region element. The short motif at 237–241 (KLSKR) is the 'KMSKS' region element. Lysine 240 is a binding site for ATP.

Belongs to the class-I aminoacyl-tRNA synthetase family. Glutamate--tRNA ligase type 1 subfamily. As to quaternary structure, monomer.

It localises to the cytoplasm. The catalysed reaction is tRNA(Glu) + L-glutamate + ATP = L-glutamyl-tRNA(Glu) + AMP + diphosphate. Catalyzes the attachment of glutamate to tRNA(Glu) in a two-step reaction: glutamate is first activated by ATP to form Glu-AMP and then transferred to the acceptor end of tRNA(Glu). This chain is Glutamate--tRNA ligase, found in Buchnera aphidicola subsp. Baizongia pistaciae (strain Bp).